Reading from the N-terminus, the 977-residue chain is ELMO domain-containing protein A (977 aa).

The 179-residue stretch at 383-561 folds into the ELMO domain; sequence EHDALLMKLW…SVKNLIITAL (179 aa). Composition is skewed to low complexity over residues 792 to 838 and 852 to 897; these read SSNN…NNSG and QQQQ…SSSS. The segment at 792-899 is disordered; it reads SSNNNIKDNL…SSSSSSSSNP (108 aa).

In terms of assembly, associates with mhcA.

In terms of biological role, functions as a negative regulator of actin polymerization. Modulates actin/myosin II at cortex actinomyosins to prevent excessive F-actin polymerization around the cell periphery, thereby maintaining proper cell shape during phagocytosis and chemotaxis. This Dictyostelium discoideum (Social amoeba) protein is ELMO domain-containing protein A (elmoA).